A 216-amino-acid polypeptide reads, in one-letter code: Probable GTP-binding protein EngB (216 aa).

The region spanning P26–E210 is the EngB-type G domain. GTP is bound by residues G34 to S41, G59 to K63, D76 to G79, N156 to D159, and I189 to A191. Residues S41 and T61 each contribute to the Mg(2+) site.

Belongs to the TRAFAC class TrmE-Era-EngA-EngB-Septin-like GTPase superfamily. EngB GTPase family. Requires Mg(2+) as cofactor.

Necessary for normal cell division and for the maintenance of normal septation. The protein is Probable GTP-binding protein EngB of Pyrococcus horikoshii (strain ATCC 700860 / DSM 12428 / JCM 9974 / NBRC 100139 / OT-3).